Reading from the N-terminus, the 415-residue chain is MEQIRLLLLLTIRVLSGSAQFNGYNCDANLHSRFPAERDISVYCGVQAITMKINFCTVLFSGYSETDLALNGRHGDSHCRGFINNNTFPAVVIFIINLSTLEGCGNNLVVSTIPGVSAYGNATSVQIGNISGYIDTPDPPTIISYLPGLLYKFSCSYPLEYLVNNTQLASSSAAISVRENNGTFVSTLNLLLYNDSTYNQQLIIPSIGLPLKTKVFAAVQATNLDGRWNVLMDYCYTTPSGNPNDDIRYDLFLSCDKDPQTTVIENGRSQRGRFSFEVFRFVKHKNQKMSTVFLHCVTKLCRADDCPFLMPICSHRERRDAGRRTTWSSQSSSGSAVLSAGPIITRSDETPTNNSQLGSPSVPPFQLNAITSALISGMVILGVMSFSLLVCPLALLHRKGPTSLVLNGIRNPVFD.

The signal sequence occupies residues 1-19 (MEQIRLLLLLTIRVLSGSA). Topologically, residues 20–372 (QFNGYNCDAN…PPFQLNAITS (353 aa)) are extracellular. One can recognise a ZP domain in the interval 43–320 (YCGVQAITMK…PICSHRERRD (278 aa)). Disulfide bonds link Cys44-Cys155 and Cys79-Cys104. N-linked (GlcNAc...) asparagine glycosylation occurs at Asn164. 2 disulfide bridges follow: Cys235–Cys296 and Cys255–Cys313. The tract at residues 323 to 359 (RRTTWSSQSSSGSAVLSAGPIITRSDETPTNNSQLGS) is disordered. Over residues 328 to 339 (SSQSSSGSAVLS) the composition is skewed to low complexity. Residues 350–359 (TPTNNSQLGS) are compositionally biased toward polar residues. A helical membrane pass occupies residues 373-393 (ALISGMVILGVMSFSLLVCPL). Over 394–415 (ALLHRKGPTSLVLNGIRNPVFD) the chain is Cytoplasmic.

In terms of processing, proteolytically cleaved before the transmembrane segment to yield the secreted form found in the extracellular matrix of the cupula.

It is found in the cytoplasmic vesicle membrane. It localises to the secreted. The protein localises to the extracellular space. Its subcellular location is the extracellular matrix. Functionally, glycoprotein which is a component of the gelatinous extracellular matrix in the cupulae of the vestibular organ. This chain is Zona pellucida-like domain-containing protein 1 (ZPLD1), found in Macaca fascicularis (Crab-eating macaque).